Reading from the N-terminus, the 215-residue chain is Pyridoxine/pyridoxamine 5'-phosphate oxidase (215 aa).

Residues 9-12 and Lys69 each bind substrate; that span reads RRDY. FMN contacts are provided by residues 64 to 69, 79 to 80, Lys86, and Gln108; these read RVLLLK and FT. Tyr126, Arg130, and Ser134 together coordinate substrate. Residues 143–144 and Trp188 each bind FMN; that span reads QS. Position 194 to 196 (194 to 196) interacts with substrate; that stretch reads RLH. Arg198 lines the FMN pocket.

Belongs to the pyridoxamine 5'-phosphate oxidase family. Homodimer. Requires FMN as cofactor.

It carries out the reaction pyridoxamine 5'-phosphate + O2 + H2O = pyridoxal 5'-phosphate + H2O2 + NH4(+). The enzyme catalyses pyridoxine 5'-phosphate + O2 = pyridoxal 5'-phosphate + H2O2. It functions in the pathway cofactor metabolism; pyridoxal 5'-phosphate salvage; pyridoxal 5'-phosphate from pyridoxamine 5'-phosphate: step 1/1. Its pathway is cofactor metabolism; pyridoxal 5'-phosphate salvage; pyridoxal 5'-phosphate from pyridoxine 5'-phosphate: step 1/1. In terms of biological role, catalyzes the oxidation of either pyridoxine 5'-phosphate (PNP) or pyridoxamine 5'-phosphate (PMP) into pyridoxal 5'-phosphate (PLP). This Pseudomonas savastanoi pv. phaseolicola (strain 1448A / Race 6) (Pseudomonas syringae pv. phaseolicola (strain 1448A / Race 6)) protein is Pyridoxine/pyridoxamine 5'-phosphate oxidase.